The following is a 475-amino-acid chain: MSSLPKTDFNVPKYQLIAQKREANAAEIEAALEVVREFIIKKKLILYGGIAIDYALHLKGSSIYPEGERPDFDMFSPNHVEDAYELADLLYEKGFKQVGTVRAIHVQTMRVRTDFVWVADLSYMPSNIFDTIPTLTYKNLKIIHPDYQRAGLHLAFCFPFDNPPREDVFSRFKKDLQRYNLIEKYYPIPVVPVKSTYENKTFSIPFKRVAIHGFAAYALLYQTLNELRMTCKVPEWKTEFPQPSYSYHKNDKNITLTVDMPKAYPSLVLATYNPEEIIKEMGLHLTEICEPYMDYSPPIFKTKDIHFFSTMFKELAISMIQDNIIVVSPQYLLLYFLYGAFATPADKALFLFYYNATLWILEKADSLLNIIQKQTSPEEFMKFANTSPFVLTTRVLRCSQDRCTFSPAYRISLANDVQQSQLPLPKTHFLSNFLPDISTLPYNYYPGKGKDRPTNFSYEKNLLFNIGGKCTQLAM.

This sequence belongs to the poxviridae poly(A) polymerase catalytic subunit family. Highly divergent.

Its subcellular location is the virion. The catalysed reaction is RNA(n) + ATP = RNA(n)-3'-adenine ribonucleotide + diphosphate. In terms of biological role, polymerase that creates the 3'-poly(A) tail of mRNA's. In Ornithodoros (relapsing fever ticks), this protein is Putative poly(A) polymerase catalytic subunit.